A 199-amino-acid chain; its full sequence is 3-hexulose-6-phosphate isomerase (199 aa).

The 143-residue stretch at 44–186 folds into the SIS domain; that stretch reads LARQIVQPGR…FQSLWDHTEV (143 aa). Substrate-binding positions include S62 and 101 to 106; that span reads SGSGTT. E166 (proton acceptor) is an active-site residue.

The protein belongs to the SIS family. PHI subfamily.

It catalyses the reaction D-arabino-hex-3-ulose 6-phosphate = beta-D-fructose 6-phosphate. Its pathway is one-carbon metabolism; formaldehyde assimilation via RuMP pathway; D-fructose 6-phosphate from D-ribulose 5-phosphate and formaldehyde: step 2/2. Functionally, catalyzes the isomerization between 3-hexulose 6-phosphate and fructose 6-phosphate. This chain is 3-hexulose-6-phosphate isomerase (rmpB), found in Mycobacterium gastri.